A 100-amino-acid chain; its full sequence is Large ribosomal subunit protein mL53 (100 aa).

Belongs to the mitochondrion-specific ribosomal protein mL53 family. As to quaternary structure, component of the mitochondrial large ribosomal subunit (mt-LSU). Mature yeast 74S mitochondrial ribosomes consist of a small (37S) and a large (54S) subunit. The 37S small subunit contains a 15S ribosomal RNA (15S mt-rRNA) and at least 32 different proteins. The 54S large subunit contains a 21S rRNA (21S mt-rRNA) and at least 45 different proteins.

The protein resides in the mitochondrion. Component of the mitochondrial ribosome (mitoribosome), a dedicated translation machinery responsible for the synthesis of mitochondrial genome-encoded proteins, including at least some of the essential transmembrane subunits of the mitochondrial respiratory chain. The mitoribosomes are attached to the mitochondrial inner membrane and translation products are cotranslationally integrated into the membrane. The protein is Large ribosomal subunit protein mL53 (mrpl44) of Schizosaccharomyces pombe (strain 972 / ATCC 24843) (Fission yeast).